Consider the following 360-residue polypeptide: Methylthioribose-1-phosphate isomerase (360 aa).

The active-site Proton donor is the D252.

It belongs to the eIF-2B alpha/beta/delta subunits family. MtnA subfamily.

It is found in the cytoplasm. It localises to the nucleus. The enzyme catalyses 5-(methylsulfanyl)-alpha-D-ribose 1-phosphate = 5-(methylsulfanyl)-D-ribulose 1-phosphate. The protein operates within amino-acid biosynthesis; L-methionine biosynthesis via salvage pathway; L-methionine from S-methyl-5-thio-alpha-D-ribose 1-phosphate: step 1/6. In terms of biological role, catalyzes the interconversion of methylthioribose-1-phosphate (MTR-1-P) into methylthioribulose-1-phosphate (MTRu-1-P). In Trichoplax adhaerens (Trichoplax reptans), this protein is Methylthioribose-1-phosphate isomerase.